Reading from the N-terminus, the 964-residue chain is Phosphoenolpyruvate carboxylase (964 aa).

Ser11 is subject to Phosphoserine. Active-site residues include His172 and Lys600.

The protein belongs to the PEPCase type 1 family. In terms of assembly, homotetramer. Requires Mg(2+) as cofactor.

The protein localises to the cytoplasm. The catalysed reaction is oxaloacetate + phosphate = phosphoenolpyruvate + hydrogencarbonate. It functions in the pathway photosynthesis; C4 acid pathway. Its activity is regulated as follows. By light-reversible phosphorylation. Its function is as follows. Through the carboxylation of phosphoenolpyruvate (PEP) it forms oxaloacetate, a four-carbon dicarboxylic acid source for the tricarboxylic acid cycle. The sequence is that of Phosphoenolpyruvate carboxylase from Amaranthus hypochondriacus (Prince-of-Wales feather).